The sequence spans 67 residues: SPbeta prophage-derived uncharacterized protein YopZ (67 aa).

The stretch at M1–V40 forms a coiled coil. The helical transmembrane segment at W44–W66 threads the bilayer.

It is found in the cell membrane. This is SPbeta prophage-derived uncharacterized protein YopZ (yopZ) from Bacillus subtilis (strain 168).